A 37-amino-acid polypeptide reads, in one-letter code: Cytochrome b6-f complex subunit 5 (37 aa).

Residues 5 to 25 (LLSGIVLGLIPITLVGLFVTA) traverse the membrane as a helical segment.

It belongs to the PetG family. In terms of assembly, the 4 large subunits of the cytochrome b6-f complex are cytochrome b6, subunit IV (17 kDa polypeptide, PetD), cytochrome f and the Rieske protein, while the 4 small subunits are PetG, PetL, PetM and PetN. The complex functions as a dimer.

It localises to the plastid. Its subcellular location is the chloroplast thylakoid membrane. Functionally, component of the cytochrome b6-f complex, which mediates electron transfer between photosystem II (PSII) and photosystem I (PSI), cyclic electron flow around PSI, and state transitions. PetG is required for either the stability or assembly of the cytochrome b6-f complex. This is Cytochrome b6-f complex subunit 5 from Welwitschia mirabilis (Tree tumbo).